The sequence spans 231 residues: MTVTIALPSKGRMKDEASAIFERAGMKIAAVGSDRSYRGRVEGWDDVEIAYLSASEIAREIGSGAVDFGVTGEDLVREGLADADARVDFAARLGFGHADVVVAVPEIWYDVDTMADLGDVAADFRARHGRRLAIATKYWRLTQQFFSGSHGIQLYRIVESLGATEGAPASGSADIIVDITSTGSTLKANHLKILSDGVILRSEACLVRARKATHEGNPVIDRIVAAVRAVL.

This sequence belongs to the ATP phosphoribosyltransferase family. Short subfamily. Heteromultimer composed of HisG and HisZ subunits.

It localises to the cytoplasm. It carries out the reaction 1-(5-phospho-beta-D-ribosyl)-ATP + diphosphate = 5-phospho-alpha-D-ribose 1-diphosphate + ATP. It participates in amino-acid biosynthesis; L-histidine biosynthesis; L-histidine from 5-phospho-alpha-D-ribose 1-diphosphate: step 1/9. Functionally, catalyzes the condensation of ATP and 5-phosphoribose 1-diphosphate to form N'-(5'-phosphoribosyl)-ATP (PR-ATP). Has a crucial role in the pathway because the rate of histidine biosynthesis seems to be controlled primarily by regulation of HisG enzymatic activity. This Rhizobium meliloti (strain 1021) (Ensifer meliloti) protein is ATP phosphoribosyltransferase (hisG).